A 124-amino-acid chain; its full sequence is Ribonuclease pancreatic (124 aa).

The disordered stretch occupies residues 1-23; sequence RESPAMKFQRQHMDSGNSPGNNP. Substrate is bound by residues lysine 7 and arginine 10. The Proton acceptor role is filled by histidine 12. Over residues 14 to 23 the composition is skewed to polar residues; the sequence is DSGNSPGNNP. Intrachain disulfides connect cysteine 26-cysteine 84, cysteine 40-cysteine 95, cysteine 58-cysteine 110, and cysteine 65-cysteine 72. Residues 41–45 and lysine 66 each bind substrate; that span reads KPVNT. N-linked (GlcNAc...) asparagine; partial glycosylation occurs at asparagine 76. Residue arginine 85 participates in substrate binding. Residue histidine 119 is the Proton donor of the active site.

It belongs to the pancreatic ribonuclease family. In terms of assembly, monomer. Interacts with and forms tight 1:1 complexes with RNH1. Dimerization of two such complexes may occur. Interaction with RNH1 inhibits this protein. In terms of tissue distribution, pancreas.

The protein resides in the secreted. The catalysed reaction is an [RNA] containing cytidine + H2O = an [RNA]-3'-cytidine-3'-phosphate + a 5'-hydroxy-ribonucleotide-3'-[RNA].. The enzyme catalyses an [RNA] containing uridine + H2O = an [RNA]-3'-uridine-3'-phosphate + a 5'-hydroxy-ribonucleotide-3'-[RNA].. Its function is as follows. Endonuclease that catalyzes the cleavage of RNA on the 3' side of pyrimidine nucleotides. Acts on single-stranded and double-stranded RNA. This Balaenoptera acutorostrata (Common minke whale) protein is Ribonuclease pancreatic (RNASE1).